The following is a 361-amino-acid chain: Phospho-N-acetylmuramoyl-pentapeptide-transferase (361 aa).

The next 10 membrane-spanning stretches (helical) occupy residues 28–48 (LAII…IEFL), 74–94 (TMGG…LADL), 99–119 (IWIT…DDYA), 133–153 (SKLL…EYLD), 168–188 (LSLD…VGSS), 203–223 (VPIA…GNLI), 236–256 (TGEL…FLWF), 263–283 (VFMG…ISVI), 288–308 (IVLA…ILQV), and 338–358 (KVVI…LSSL).

It belongs to the glycosyltransferase 4 family. MraY subfamily. Mg(2+) is required as a cofactor.

The protein resides in the cell membrane. It catalyses the reaction UDP-N-acetyl-alpha-D-muramoyl-L-alanyl-gamma-D-glutamyl-meso-2,6-diaminopimeloyl-D-alanyl-D-alanine + di-trans,octa-cis-undecaprenyl phosphate = di-trans,octa-cis-undecaprenyl diphospho-N-acetyl-alpha-D-muramoyl-L-alanyl-D-glutamyl-meso-2,6-diaminopimeloyl-D-alanyl-D-alanine + UMP. The protein operates within cell wall biogenesis; peptidoglycan biosynthesis. In terms of biological role, catalyzes the initial step of the lipid cycle reactions in the biosynthesis of the cell wall peptidoglycan: transfers peptidoglycan precursor phospho-MurNAc-pentapeptide from UDP-MurNAc-pentapeptide onto the lipid carrier undecaprenyl phosphate, yielding undecaprenyl-pyrophosphoryl-MurNAc-pentapeptide, known as lipid I. The protein is Phospho-N-acetylmuramoyl-pentapeptide-transferase of Rickettsia rickettsii.